The following is a 207-amino-acid chain: Proteasome subunit beta (207 aa).

Positions 1–7 are cleaved as a propeptide — removed in mature form; by autocatalysis; the sequence is MVEAFKG. The active-site Nucleophile is Thr8.

Belongs to the peptidase T1B family. As to quaternary structure, the 20S proteasome core is composed of 14 alpha and 14 beta subunits that assemble into four stacked heptameric rings, resulting in a barrel-shaped structure. The two inner rings, each composed of seven catalytic beta subunits, are sandwiched by two outer rings, each composed of seven alpha subunits. The catalytic chamber with the active sites is on the inside of the barrel. Has a gated structure, the ends of the cylinder being occluded by the N-termini of the alpha-subunits. Is capped at one or both ends by the proteasome regulatory ATPase, PAN.

Its subcellular location is the cytoplasm. It catalyses the reaction Cleavage of peptide bonds with very broad specificity.. The formation of the proteasomal ATPase PAN-20S proteasome complex, via the docking of the C-termini of PAN into the intersubunit pockets in the alpha-rings, triggers opening of the gate for substrate entry. Interconversion between the open-gate and close-gate conformations leads to a dynamic regulation of the 20S proteasome proteolysis activity. Component of the proteasome core, a large protease complex with broad specificity involved in protein degradation. In Methanothrix thermoacetophila (strain DSM 6194 / JCM 14653 / NBRC 101360 / PT) (Methanosaeta thermophila), this protein is Proteasome subunit beta.